Here is a 304-residue protein sequence, read N- to C-terminus: Recombination-associated protein RdgC (304 aa).

The protein belongs to the RdgC family.

The protein localises to the cytoplasm. The protein resides in the nucleoid. Functionally, may be involved in recombination. This is Recombination-associated protein RdgC from Paraburkholderia phymatum (strain DSM 17167 / CIP 108236 / LMG 21445 / STM815) (Burkholderia phymatum).